We begin with the raw amino-acid sequence, 1086 residues long: Tyrosine-protein kinase receptor svh-2 (1086 aa).

An N-terminal signal peptide occupies residues 1 to 34 (MVLGSSQSSAKELTTQSSIFRFLVLLLCFTSATG). Topologically, residues 35-651 (GQINGKLLNG…DKKGSSPGWK (617 aa)) are extracellular. N-linked (GlcNAc...) asparagine glycans are attached at residues Asn-276, Asn-299, Asn-461, Asn-554, and Asn-617. A helical membrane pass occupies residues 652–672 (IAIAIISVMTIILIVAIIVYY). Residues 673 to 1086 (MRNRFPRIKT…LLSECSETSV (414 aa)) lie on the Cytoplasmic side of the membrane. Residues 735–996 (VDKLDPIGQG…SDLVTIIPNV (262 aa)) enclose the Protein kinase domain. Residues 741–749 (IGQGHYGVV) and Lys-767 each bind ATP. The active-site Proton acceptor is the Asp-858. At Tyr-890 the chain carries Phosphotyrosine. Residues 1056–1086 (AELPSDSPSTSTAIPQSTPYQLLSECSETSV) are disordered. Over residues 1061–1086 (DSPSTSTAIPQSTPYQLLSECSETSV) the composition is skewed to polar residues.

Belongs to the protein kinase superfamily. Tyr protein kinase family. Interacts (via cytoplasmic domain) with mlk-1. Interacts with shc-1 (via SH2 domain). May interact (when tyrosine-phosphorylated) with tns-1 (via SH2 domain). May be autophosphorylated on Tyr-890 following dimerization. Expressed in body wall and vulva muscles, pharynx, intestine, excretory canals, distal tip cells and some neurons. Expressed in D-type motor neurons upon axon injury.

The protein resides in the cell membrane. It catalyses the reaction L-tyrosyl-[protein] + ATP = O-phospho-L-tyrosyl-[protein] + ADP + H(+). Receptor tyrosine kinase which may phosphorylate mlk-1, a component of the mlk-1, mek-1 and kgb-1 pathway. Involved in axon regeneration after injury by promoting the generation of productive and stable growth cones. The sequence is that of Tyrosine-protein kinase receptor svh-2 from Caenorhabditis elegans.